Consider the following 225-residue polypeptide: MAKDTTGRLHVTVKSGGKRKLSSKLWLERQLNDPYVAQAKRDGFRSRAAYKLREMDDKYHFLKQGQAVVDLGAAPGGWSQIAAKRVGAEAGRGKVIAIDLLEMGEIPGVTFAQLDFLSDDAPEKLRAMLGGGADIVMSDMAANTTGHRKTDQLRIVGLVESAAAFAAEVLNPGGTFLAKVFQSGADATLQAELKRNFATVRHVKPAASRQDSSERYVLAMGFRGG.

Positions 76, 78, 99, 115, and 139 each coordinate S-adenosyl-L-methionine. K179 functions as the Proton acceptor in the catalytic mechanism.

It belongs to the class I-like SAM-binding methyltransferase superfamily. RNA methyltransferase RlmE family.

The protein localises to the cytoplasm. It catalyses the reaction uridine(2552) in 23S rRNA + S-adenosyl-L-methionine = 2'-O-methyluridine(2552) in 23S rRNA + S-adenosyl-L-homocysteine + H(+). Its function is as follows. Specifically methylates the uridine in position 2552 of 23S rRNA at the 2'-O position of the ribose in the fully assembled 50S ribosomal subunit. The chain is Ribosomal RNA large subunit methyltransferase E from Afipia carboxidovorans (strain ATCC 49405 / DSM 1227 / KCTC 32145 / OM5) (Oligotropha carboxidovorans).